The following is a 295-amino-acid chain: Non-selective voltage-gated ion channel VDAC2 (295 aa).

Positions 24 and 32 each coordinate ATP. Lys32 bears the N6-acetyllysine; alternate mark. N6-succinyllysine; alternate is present on Lys32. A Glycyl lysine isopeptide (Lys-Gly) (interchain with G-Cter in ubiquitin); alternate cross-link involves residue Lys32. The next 2 beta stranded transmembrane spans lie at Leu38–Thr45 and Val51–Asn60. Lys65 is covalently cross-linked (Glycyl lysine isopeptide (Lys-Gly) (interchain with G-Cter in ubiquitin)). Residues Val66–Trp76 form a beta stranded membrane-spanning segment. Tyr79 carries the phosphotyrosine modification. A run of 3 beta stranded transmembrane segments spans residues Leu81–Asn88, Thr92–Glu100, and Leu107–Ser116. Thr119 is modified (phosphothreonine). N6-acetyllysine; alternate is present on Lys121. Lys121 is covalently cross-linked (Glycyl lysine isopeptide (Lys-Gly) (interchain with G-Cter in ubiquitin); alternate). Lys122 participates in a covalent cross-link: Glycyl lysine isopeptide (Lys-Gly) (interchain with G-Cter in ubiquitin). A run of 4 beta stranded transmembrane segments spans residues Lys122–Lys131, Ile135–Asp144, Pro148–Gly157, and Trp161–Asp170. Residue Lys173 forms a Glycyl lysine isopeptide (Lys-Gly) (interchain with G-Cter in ubiquitin) linkage. Transmembrane regions (beta stranded) follow at residues Thr177 to Thr187, Phe190 to Asn197, Glu201 to Val210, Phe214 to Trp222, Thr229 to Gln238, and Ala243 to Asn250. A Phosphoserine modification is found at Ser252. NAD(+) is bound by residues Leu254 to Gly256 and Ser272 to Asp276. Beta stranded transmembrane passes span Leu254–Leu263 and Val267–Val275. Lys278 carries the N6-acetyllysine; alternate modification. Lys278 participates in a covalent cross-link: Glycyl lysine isopeptide (Lys-Gly) (interchain with G-Cter in ubiquitin); alternate. A beta stranded transmembrane segment spans residues His285–Ala295.

It belongs to the eukaryotic mitochondrial porin family. As to quaternary structure, monomer, homodimer and higher order oligomers; formation of higher order structures is necessary for scramblase activity. Interacts with ARMC12 in a TBC1D21-dependent manner. Interacts with KLC3. Interacts with SPATA33. Interacts with PPP3CC in a SPATA33-dependent manner. Post-translationally, ubiquitinated by PRKN during mitophagy, leading to its degradation and enhancement of mitophagy. Deubiquitinated by USP30. In terms of tissue distribution, highest levels of expression detected in testis, less but still abundant expression in heart, kidney, brain, and skeletal muscle. Expressed in the sperm midpiece (at protein level).

It localises to the mitochondrion outer membrane. The protein localises to the membrane. The catalysed reaction is chloride(in) = chloride(out). The enzyme catalyses K(+)(in) = K(+)(out). It carries out the reaction a 1,2-diacyl-sn-glycero-3-phospho-L-serine(in) = a 1,2-diacyl-sn-glycero-3-phospho-L-serine(out). It catalyses the reaction a 1,2-diacyl-sn-glycero-3-phosphocholine(in) = a 1,2-diacyl-sn-glycero-3-phosphocholine(out). The catalysed reaction is a 1,2-diacyl-sn-glycero-3-phospho-(1D-myo-inositol)(in) = a 1,2-diacyl-sn-glycero-3-phospho-(1D-myo-inositol)(out). Its function is as follows. Non-selective voltage-gated ion channel that mediates the transport of anions and cations through the mitochondrion outer membrane and plasma membrane. The channel adopts an open conformation at zero mV and a closed conformation at both positive and negative potentials. There are two populations of channels; the main that functions in a lower open-state conductance with lower ion selectivity, that switch, in a voltage-dependent manner, from the open to a low-conducting 'closed' state and the other that has a normal ion selectivity in the typical high conductance, 'open' state. Binds various lipids, including the sphingolipid ceramide, the phospholipid phosphatidylcholine, and the sterols cholesterol and oxysterol. Binding of ceramide promotes the mitochondrial outer membrane permeabilization (MOMP) apoptotic pathway. Functionally, catalyzes the scrambling of phospholipids across the outer mitochondrial membrane; the mechanism is unrelated to channel activity and is capable of translocating both anionic and zwitterionic phospholipids. The protein is Non-selective voltage-gated ion channel VDAC2 of Mus musculus (Mouse).